The chain runs to 90 residues: Probable Fe(2+)-trafficking protein (90 aa).

Belongs to the Fe(2+)-trafficking protein family.

Its function is as follows. Could be a mediator in iron transactions between iron acquisition and iron-requiring processes, such as synthesis and/or repair of Fe-S clusters in biosynthetic enzymes. This is Probable Fe(2+)-trafficking protein from Cupriavidus taiwanensis (strain DSM 17343 / BCRC 17206 / CCUG 44338 / CIP 107171 / LMG 19424 / R1) (Ralstonia taiwanensis (strain LMG 19424)).